A 510-amino-acid polypeptide reads, in one-letter code: Probable malate:quinone oxidoreductase (510 aa).

Belongs to the MQO family. It depends on FAD as a cofactor.

It carries out the reaction (S)-malate + a quinone = a quinol + oxaloacetate. It participates in carbohydrate metabolism; tricarboxylic acid cycle; oxaloacetate from (S)-malate (quinone route): step 1/1. The polypeptide is Probable malate:quinone oxidoreductase (Wigglesworthia glossinidia brevipalpis).